The following is a 228-amino-acid chain: Orotate phosphoribosyltransferase (228 aa).

Residues Arg107, Lys108, Lys111, and 133-141 contribute to the 5-phospho-alpha-D-ribose 1-diphosphate site; that span reads EDLTTDGGS. Position 137 (Thr137) interacts with orotate.

The protein belongs to the purine/pyrimidine phosphoribosyltransferase family. PyrE subfamily. Homodimer. Requires Mg(2+) as cofactor.

It carries out the reaction orotidine 5'-phosphate + diphosphate = orotate + 5-phospho-alpha-D-ribose 1-diphosphate. It functions in the pathway pyrimidine metabolism; UMP biosynthesis via de novo pathway; UMP from orotate: step 1/2. Catalyzes the transfer of a ribosyl phosphate group from 5-phosphoribose 1-diphosphate to orotate, leading to the formation of orotidine monophosphate (OMP). The polypeptide is Orotate phosphoribosyltransferase (Jannaschia sp. (strain CCS1)).